Consider the following 228-residue polypeptide: Glutamate transport system permease protein GluC (228 aa).

The next 4 membrane-spanning stretches (helical) occupy residues 16-36 (FWVTIQLTVYSAIGSMILGTI), 64-84 (LTLVILFCSFGLYQNLGLTLA), 100-120 (AVLGFILYTSAFVAESLRSGI), and 195-215 (LFVVFAIFAVGFMILTLPMGL). The ABC transmembrane type-1 domain maps to 16–217 (FWVTIQLTVY…ILTLPMGLGL (202 aa)).

Belongs to the binding-protein-dependent transport system permease family. HisMQ subfamily. As to quaternary structure, the complex is composed of two ATP-binding proteins (GluA), two transmembrane proteins (GluC and GluD) and a solute-binding protein (GluB).

The protein localises to the cell membrane. Its function is as follows. Part of the ABC transporter complex GluABCD involved in glutamate uptake. Probably responsible for the translocation of the substrate across the membrane. The sequence is that of Glutamate transport system permease protein GluC from Corynebacterium efficiens (strain DSM 44549 / YS-314 / AJ 12310 / JCM 11189 / NBRC 100395).